Here is a 529-residue protein sequence, read N- to C-terminus: Autoinducer-2 kinase (529 aa).

Belongs to the FGGY kinase family.

The protein resides in the cytoplasm. It carries out the reaction (S)-4,5-dihydroxypentane-2,3-dione + ATP = (2S)-2-hydroxy-3,4-dioxopentyl phosphate + ADP + H(+). Catalyzes the phosphorylation of autoinducer-2 (AI-2) to phospho-AI-2, which subsequently inactivates the transcriptional regulator LsrR and leads to the transcription of the lsr operon. Phosphorylates the ring-open form of (S)-4,5-dihydroxypentane-2,3-dione (DPD), which is the precursor to all AI-2 signaling molecules, at the C5 position. This chain is Autoinducer-2 kinase, found in Yersinia enterocolitica serotype O:8 / biotype 1B (strain NCTC 13174 / 8081).